The sequence spans 1088 residues: Leucine-rich repeat receptor-like protein kinase PEPR2 (1088 aa).

Positions 1 to 26 are cleaved as a signal peptide; it reads MRNLGLLEITLLCSLFVYFRIDSVSS. At 27–739 the chain is on the extracellular side; it reads LNSDGLALLS…QVKLSTWKIA (713 aa). N55, N82, and N122 each carry an N-linked (GlcNAc...) asparagine glycan. LRR repeat units lie at residues 75 to 99, 100 to 122, 123 to 146, 147 to 170, 172 to 194, 195 to 219, 221 to 243, 244 to 267, 269 to 291, 292 to 315, 316 to 339, 341 to 363, 365 to 387, 388 to 411, 412 to 435, 436 to 459, 460 to 485, 487 to 506, 507 to 529, 530 to 554, 556 to 577, 578 to 602, 603 to 627, 629 to 651, 652 to 676, and 678 to 698; these read GNVVETLNLSASGLSGQLGSEIGEL, KSLVTLDLSLNSFSGLLPSTLGN, CTSLEYLDLSNNDFSGEVPDIFGS, LQNLTFLYLDRNNLSGLIPASVGG, IELVDLRMSYNNLSGTIPELLGN, CSKLEYLALNNNKLNGSLPASLYLL, NLGELFVSNNSLGGRLHFGSSNC, KKLVSLDLSFNDFQGGVPPEIGNC, SLHSLVMVKCNLTGTIPSSMGML, RKVSVIDLSDNRLSGNIPQELGNC, SSLETLKLNDNQLQGEIPPALSKL, KLQSLELFFNKLSGEIPIGIWKI, SLTQMLVYNNTLTGELPVEVTQL, KHLKKLTLFNNGFYGDIPMSLGLN, RSLEEVDLLGNRFTGEIPPHLCHG, QKLRLFILGSNQLHGKIPASIRQC, KTLERVRLEDNKLSGVLPEFPESLSL, YVNLGSNSFEGSIPRSLGSC, KNLLTIDLSQNKLTGLIPPELGN, LQSLGLLNLSHNYLEGPLPSQLSGC, RLLYFDVGSNSLNGSIPSSFRS, WKSLSTLVLSDNNFLGAIPQFLAEL, DRLSDLRIARNAFGGKIPSSVGLLK, LRYGLDLSANVFTGEIPTTLGAL, INLERLNISNNKLTGPLSVLQSLKS, and NQVDVSYNQFTGPIPVNLLSN. N-linked (GlcNAc...) asparagine glycans are attached at residues N149, N159, N183, N194, N209, N229, N266, N279, and N314. N-linked (GlcNAc...) asparagine glycosylation is found at N373 and N411. N-linked (GlcNAc...) asparagine glycosylation is found at N537 and N568. Residues N658 and N698 are each glycosylated (N-linked (GlcNAc...) asparagine). Residues 740–760 form a helical membrane-spanning segment; it reads LIAAGSSLSVLALLFALFLVL. At 761–1088 the chain is on the cytoplasmic side; sequence CRCKRGTKTE…FVRSTSGSVH (328 aa). A Phosphothreonine modification is found at T791. The Protein kinase domain maps to 794-1080; the sequence is LDDKYIIGRG…KDLTDLESFV (287 aa). ATP contacts are provided by residues 800–808 and K822; that span reads IGRGAHGVV. Residues Y868 and Y908 each carry the phosphotyrosine modification. The active-site Proton acceptor is D921. Phosphotyrosine occurs at positions 962 and 969.

The protein belongs to the protein kinase superfamily. Ser/Thr protein kinase family. In terms of assembly, interacts with BAK1. Interacts with CLE14.

It is found in the cell membrane. It catalyses the reaction L-seryl-[protein] + ATP = O-phospho-L-seryl-[protein] + ADP + H(+). The catalysed reaction is L-threonyl-[protein] + ATP = O-phospho-L-threonyl-[protein] + ADP + H(+). Functionally, acts as a receptor for PEP defense peptides. Unlike typical immune receptors, senses an endogenous elicitor that potentiates PAMP-inducible plant responses. The chain is Leucine-rich repeat receptor-like protein kinase PEPR2 (PEPR2) from Arabidopsis thaliana (Mouse-ear cress).